The primary structure comprises 232 residues: 2-C-methyl-D-erythritol 4-phosphate cytidylyltransferase (232 aa).

Belongs to the IspD/TarI cytidylyltransferase family. IspD subfamily.

The enzyme catalyses 2-C-methyl-D-erythritol 4-phosphate + CTP + H(+) = 4-CDP-2-C-methyl-D-erythritol + diphosphate. It functions in the pathway isoprenoid biosynthesis; isopentenyl diphosphate biosynthesis via DXP pathway; isopentenyl diphosphate from 1-deoxy-D-xylulose 5-phosphate: step 2/6. Functionally, catalyzes the formation of 4-diphosphocytidyl-2-C-methyl-D-erythritol from CTP and 2-C-methyl-D-erythritol 4-phosphate (MEP). This chain is 2-C-methyl-D-erythritol 4-phosphate cytidylyltransferase, found in Stenotrophomonas maltophilia (strain R551-3).